Consider the following 720-residue polypeptide: MSEGAAAASPPGAASAAAASAEEGTAAAAAAAAAGGGPDGGGEGAAEPPRELRCSDCIVWNRQQTWLCVVPLFIGFIGLGLSLMLLKWIVVGSVKEYVPTDLVDSKGMGQDPFFLSKPSSFPKAMETTTTTTSTTSPATPSAGGAASSRTPNRISTRLTTITRAPTRFPGHRVPIRASPRSTTARNTAAPATVPSTTAPFFSSSTLGSRPPVPGTPSTQAMPSWPTAAYATSSYLHDSTPSWTLSPFQDAASSSSSSSSSATTTTPETSTSPKFHTTTYSTERSEHFKPCRDKDLAYCLNDGECFVIETLTGSHKHCRCKEGYQGVRCDQFLPKTDSILSDPTDHLGIEFMESEEVYQRQVLSISCIIFGIVIVGMFCAAFYFKSKKQAKQIQEQLKVPQNGKSYSLKASSTMAKSENLVKSHVQLQNYSKVERHPVTALEKMMESSFVGPQSFPEVPSPDRGSQSVKHHRSLSSCCSPGQRSGMLHRNAFRRTPPSPRSRLGGIVGPAYQQLEESRIPDQDTIPCQGIEVRKTISHLPIQLWCVERPLDLKYSSSGLKTQRNTSINMQLPSRETNPYFNSLEQKDLVGYSSTRASSVPIIPSVGLEETCLQMPGISEVKSIKWCKNSYSADVVNVSIPVSDCLIAEQQEVKILLETVQEQIRILTDARRSEDYELASVETEDSASENTAFLPLSPTAKSEREAQFVLRNEIQRDSALTK.

The Extracellular segment spans residues 1-360 (MSEGAAAASP…MESEEVYQRQ (360 aa)). Disordered stretches follow at residues 28–48 (AAAA…AAEP), 119–223 (SSFP…AMPS), and 246–280 (PFQD…TTYS). Residues 34 to 44 (AGGGPDGGGEG) are compositionally biased toward gly residues. Over residues 127-148 (TTTTTTSTTSPATPSAGGAASS) the composition is skewed to low complexity. Over residues 149–163 (RTPNRISTRLTTITR) the composition is skewed to polar residues. Composition is skewed to low complexity over residues 187–205 (TAAP…SSST) and 250–271 (AASS…TSTS). The EGF-like domain occupies 286–329 (HFKPCRDKDLAYCLNDGECFVIETLTGSHKHCRCKEGYQGVRCD). Cystine bridges form between C290-C304, C298-C317, and C319-C328. The helical transmembrane segment at 361–381 (VLSISCIIFGIVIVGMFCAAF) threads the bilayer. The Cytoplasmic segment spans residues 382-720 (YFKSKKQAKQ…EIQRDSALTK (339 aa)). Residues 451 to 481 (PQSFPEVPSPDRGSQSVKHHRSLSSCCSPGQ) are disordered.

This sequence belongs to the neuregulin family. As to quaternary structure, interacts with ERBB4. Proteolytic cleavage close to the plasma membrane on the external face leads to the release of the soluble growth factor form. In terms of processing, extensive glycosylation precedes the proteolytic cleavage. Isoform 3 is glycosylated. As to expression, highly expressed in most regions of the brain with the exception of corpus callosum. Expressed at lower level in testis. Not detected in heart, placenta, lung, liver, skeletal muscle, kidney, pancreas, spleen, thymus, prostate, ovary, small intestine, colon and peripheral blood leukocytes.

It is found in the cell membrane. Its subcellular location is the secreted. Functionally, direct ligand for the ERBB4 tyrosine kinase receptor. Binding results in ligand-stimulated tyrosine phosphorylation and activation of the receptor. Does not bind to the EGF receptor, ERBB2 or ERBB3 receptors. May be a survival factor for oligodendrocytes. The protein is Pro-neuregulin-3, membrane-bound isoform (NRG3) of Homo sapiens (Human).